The sequence spans 232 residues: MVDIVVTGLSANSVPYIEALERQRALHADVVAGRAQDTVILLEHPSVYTAGRRTEPDDRPRDGTPVIDVDRGGRITWHGPGQLVGYPIVRLPEPLDVVAHVRRLEDALIALLAELGIASCRVDGRSGVWIRGTAPDGTPRDEKVAAIGVRVAERVTMHGFALNCSNALDAYDRIVPCGIRDAGVTSLSRVLGRTVTPADVVPLLRPHLVRALSNGSAMPATPALPSAAGARA.

The BPL/LPL catalytic domain occupies Gly-33–Ser-216. Substrate-binding positions include Arg-71 to His-78, Ala-146 to Gly-148, and Gly-159 to Ala-161. The active-site Acyl-thioester intermediate is the Cys-177.

The protein belongs to the LipB family.

It is found in the cytoplasm. It catalyses the reaction octanoyl-[ACP] + L-lysyl-[protein] = N(6)-octanoyl-L-lysyl-[protein] + holo-[ACP] + H(+). Its pathway is protein modification; protein lipoylation via endogenous pathway; protein N(6)-(lipoyl)lysine from octanoyl-[acyl-carrier-protein]: step 1/2. Functionally, catalyzes the transfer of endogenously produced octanoic acid from octanoyl-acyl-carrier-protein onto the lipoyl domains of lipoate-dependent enzymes. Lipoyl-ACP can also act as a substrate although octanoyl-ACP is likely to be the physiological substrate. The polypeptide is Octanoyltransferase (Clavibacter sepedonicus (Clavibacter michiganensis subsp. sepedonicus)).